The primary structure comprises 245 residues: tRNA1(Val) (adenine(37)-N6)-methyltransferase (245 aa).

It belongs to the methyltransferase superfamily. tRNA (adenine-N(6)-)-methyltransferase family.

Its subcellular location is the cytoplasm. It carries out the reaction adenosine(37) in tRNA1(Val) + S-adenosyl-L-methionine = N(6)-methyladenosine(37) in tRNA1(Val) + S-adenosyl-L-homocysteine + H(+). Functionally, specifically methylates the adenine in position 37 of tRNA(1)(Val) (anticodon cmo5UAC). The polypeptide is tRNA1(Val) (adenine(37)-N6)-methyltransferase (Escherichia coli O157:H7).